A 415-amino-acid polypeptide reads, in one-letter code: Multidrug resistance protein MdtA (415 aa).

Positions 1-21 (MKGSYKSRWVIVIVVVIAAIA) are cleaved as a signal peptide. The segment covering 31–46 (DSQSAAPGATKQAQQS) has biased composition (polar residues). Disordered stretches follow at residues 31–56 (DSQS…GMRA) and 391–415 (VEAQ…GARS). Basic and acidic residues predominate over residues 399–415 (PEEKATSREYAKKGARS).

The protein belongs to the membrane fusion protein (MFP) (TC 8.A.1) family. In terms of assembly, part of a tripartite efflux system composed of MdtA, MdtB and MdtC.

The protein resides in the cell inner membrane. In terms of biological role, the MdtABC tripartite complex confers resistance against novobiocin and deoxycholate. The protein is Multidrug resistance protein MdtA of Escherichia coli O45:K1 (strain S88 / ExPEC).